Here is a 251-residue protein sequence, read N- to C-terminus: ATP synthase subunit a (251 aa).

5 consecutive transmembrane segments (helical) span residues 34–54 (VFLT…AASS), 93–113 (FVGT…LVPF), 130–150 (INTT…AGFS), 195–215 (LVVG…VMAL), and 216–236 (GLFT…AYIG).

It belongs to the ATPase A chain family. F-type ATPases have 2 components, CF(1) - the catalytic core - and CF(0) - the membrane proton channel. CF(1) has five subunits: alpha(3), beta(3), gamma(1), delta(1), epsilon(1). CF(0) has four main subunits: a, b, b' and c.

It localises to the cellular thylakoid membrane. Functionally, key component of the proton channel; it plays a direct role in the translocation of protons across the membrane. The sequence is that of ATP synthase subunit a from Nostoc sp. (strain PCC 7120 / SAG 25.82 / UTEX 2576).